The sequence spans 614 residues: Zinc finger and SCAN domain-containing protein 2 (614 aa).

Disordered stretches follow at residues 1-26 (MMAADIPRVTTPLSSLVQVPQEEDRQ) and 43-76 (EAVLQEDGPESEPFPQSAGKGGPQEEVTRGPQGA). The 74-residue stretch at 59-132 (SAGKGGPQEE…ALVEDLTQTL (74 aa)) folds into the SCAN box domain. C2H2-type zinc fingers lie at residues 222-244 (YECPQCGKTFSRKSHLITHERTH), 250-272 (YKCDECGKSFSDGSNFSRHQTTH), 278-300 (YKCRDCGKSFSRSANLITHQRIH), 306-328 (FQCAECGKSFSRSPNLIAHQRTH), 334-356 (YSCPECGKSFGNRSSLNTHQGIH), 362-384 (YECKECGESFSYNSNLIRHQRIH), 390-412 (YKCTDCGQRFSQSSALITHRRTH), 418-440 (YQCSECGKSFSRSSNLATHRRTH), 446-468 (YKCGVCGKSFSQSSSLIAHQGMH), 474-496 (YECLTCGESFSWSSNLLKHQRIH), 502-524 (YKCSECGKCFSQRSQLVVHQRTH), 530-552 (YKCLMCGKSFSRGSILVMHQRAH), 558-580 (YRCPECGKGFSWNSVLIIHQRIH), and 586-608 (YKCPECGKGFSNSSNFITHQRTH).

This sequence belongs to the krueppel C2H2-type zinc-finger protein family.

The protein localises to the nucleus. Functionally, may be involved in transcriptional regulation during the post-meiotic stages of spermatogenesis. This is Zinc finger and SCAN domain-containing protein 2 (ZSCAN2) from Homo sapiens (Human).